The sequence spans 34 residues: MEALVYTFLLVSTLGIIFFAIFFREPPKVPTKKN.

A helical membrane pass occupies residues 3–23; it reads ALVYTFLLVSTLGIIFFAIFF.

Belongs to the PsbT family. In terms of assembly, PSII is composed of 1 copy each of membrane proteins PsbA, PsbB, PsbC, PsbD, PsbE, PsbF, PsbH, PsbI, PsbJ, PsbK, PsbL, PsbM, PsbT, PsbY, PsbZ, Psb30/Ycf12, at least 3 peripheral proteins of the oxygen-evolving complex and a large number of cofactors. It forms dimeric complexes.

Its subcellular location is the plastid. It localises to the chloroplast thylakoid membrane. In terms of biological role, found at the monomer-monomer interface of the photosystem II (PS II) dimer, plays a role in assembly and dimerization of PSII. PSII is a light-driven water plastoquinone oxidoreductase, using light energy to abstract electrons from H(2)O, generating a proton gradient subsequently used for ATP formation. This Solanum bulbocastanum (Wild potato) protein is Photosystem II reaction center protein T.